A 225-amino-acid polypeptide reads, in one-letter code: UPF0173 metal-dependent hydrolase PYRAB05000 (225 aa).

Belongs to the UPF0173 family.

This chain is UPF0173 metal-dependent hydrolase PYRAB05000, found in Pyrococcus abyssi (strain GE5 / Orsay).